Here is a 209-residue protein sequence, read N- to C-terminus: Redox-sensing transcriptional repressor Rex (209 aa).

The H-T-H motif DNA-binding region spans 16 to 55; the sequence is LYYRFIQNLSLSGKQRVSSAELSEAVKVDSATIRRDFSYF. 90–95 provides a ligand contact to NAD(+); it reads GVGNLG.

Belongs to the transcriptional regulatory Rex family. In terms of assembly, homodimer.

It localises to the cytoplasm. Its function is as follows. Modulates transcription in response to changes in cellular NADH/NAD(+) redox state. The sequence is that of Redox-sensing transcriptional repressor Rex from Bacillus cereus (strain ATCC 10987 / NRS 248).